The primary structure comprises 319 residues: Major intracellular serine protease (319 aa).

Positions 1–17 are excised as a propeptide; it reads MNGEIRLIPYVTNEQIM. The Peptidase S8 domain maps to 23–307; that stretch reads PEGIKVIKAP…FLYLTAPDEL (285 aa). Active-site charge relay system residues include D50, H87, and S246.

This sequence belongs to the peptidase S8 family. In terms of assembly, homodimer.

The protein resides in the cytoplasm. Major intracellular protease produced by Bacillus subtilis. The sequence is that of Major intracellular serine protease (isp) from Bacillus subtilis (strain 168).